The following is a 385-amino-acid chain: Lipid-A-disaccharide synthase (385 aa).

It belongs to the LpxB family.

It catalyses the reaction 2-N,3-O-bis[(3R)-3-hydroxytetradecanoyl]-alpha-D-glucosaminyl 1-phosphate + UDP-2-N,3-O-bis[(3R)-3-hydroxytetradecanoyl]-alpha-D-glucosamine = lipid A disaccharide (E. coli) + UDP + H(+). The enzyme catalyses a lipid X + a UDP-2-N,3-O-bis[(3R)-3-hydroxyacyl]-alpha-D-glucosamine = a lipid A disaccharide + UDP + H(+). It functions in the pathway glycolipid biosynthesis; lipid IV(A) biosynthesis; lipid IV(A) from (3R)-3-hydroxytetradecanoyl-[acyl-carrier-protein] and UDP-N-acetyl-alpha-D-glucosamine: step 5/6. Condensation of UDP-2,3-diacylglucosamine and 2,3-diacylglucosamine-1-phosphate to form lipid A disaccharide, a precursor of lipid A, a phosphorylated glycolipid that anchors the lipopolysaccharide to the outer membrane of the cell. This chain is Lipid-A-disaccharide synthase, found in Wigglesworthia glossinidia brevipalpis.